Here is a 356-residue protein sequence, read N- to C-terminus: MKLITAPCRALLALPFCYAFSAAGEEARPAEHDDTKTPAITSTSSPSFRFYGELGVGGYMDLEGENKHKYSDGTYIEGGLEMKYGSWFGLIYGEGWTVQADHDGNAWVPDHSWGGFEGGINRFYGGYRTNDGTEIMLSLRQDSSLDDLQWWGDFTPDLGYVIPNTRDIMTALKVQNLSGNFRYSVTATPAGHHDESKAWLHFGKYDRYDDKYTYPAMMNGYIQYDLAEGITWMNGLEITDGTGQLYLTGLLTPNFAARAWHHTGRADGLDVPGSESGMMVSAMYEALKGVYLSTAYTYAKHRPDHADDETTSFMQFGIWYEYGGGRFATAFDSRFYMKNASHDPSDQIFLMQYFYW.

Residues 1–21 (MKLITAPCRALLALPFCYAFS) form the signal peptide.

This is an uncharacterized protein from Escherichia coli (strain K12).